The chain runs to 367 residues: Serine/threonine-protein kinase Sgk2 (367 aa).

Positions 1–28 are disordered; it reads MASSPVGVPSPQPSRANGNINLGPSANP. At Ser10 the chain carries Phosphoserine. The span at 15–28 shows a compositional bias: polar residues; that stretch reads RANGNINLGPSANP. A Protein kinase domain is found at 35–292; sequence FDFLKVIGKG…FLDIKNHMFF (258 aa). ATP contacts are provided by residues 41 to 49 and Lys64; that span reads IGKGNYGKV. The Nuclear localization signal signature appears at 68–78; the sequence is KKSILKNKEQN. Catalysis depends on Asp159, which acts as the Proton acceptor. Thr193 is modified (phosphothreonine; by PDPK1). An AGC-kinase C-terminal domain is found at 293-367; the sequence is SPINWDDLYH…AQDDDDILDS (75 aa). A phosphoserine mark is found at Ser334 and Ser356. Tyr357 carries the phosphotyrosine modification.

The protein belongs to the protein kinase superfamily. AGC Ser/Thr protein kinase family. Post-translationally, activated by phosphorylation on Ser-356 by an unknown kinase (may be mTORC2 but not confirmed), transforming it into a substrate for PDPK1 which then phosphorylates it on Thr-193.

The protein resides in the cytoplasm. Its subcellular location is the nucleus. The catalysed reaction is L-seryl-[protein] + ATP = O-phospho-L-seryl-[protein] + ADP + H(+). The enzyme catalyses L-threonyl-[protein] + ATP = O-phospho-L-threonyl-[protein] + ADP + H(+). Its activity is regulated as follows. Two specific sites, one in the kinase domain (Thr-193) and the other in the C-terminal regulatory region (Ser-356), need to be phosphorylated for its full activation. Serine/threonine-protein kinase which is involved in the regulation of a wide variety of ion channels, membrane transporters, cell growth, survival and proliferation. Up-regulates Na(+) channels: SCNN1A/ENAC, K(+) channels: KCNA3/Kv1.3, KCNE1 and KCNQ1, amino acid transporter: SLC6A19, glutamate transporter: SLC1A6/EAAT4, glutamate receptors: GRIA1/GLUR1 and GRIK2/GLUR6, Na(+)/H(+) exchanger: SLC9A3/NHE3, and the Na(+)/K(+) ATPase. This Mus musculus (Mouse) protein is Serine/threonine-protein kinase Sgk2 (Sgk2).